Reading from the N-terminus, the 168-residue chain is G/U mismatch-specific DNA glycosylase (168 aa).

This sequence belongs to the uracil-DNA glycosylase (UDG) superfamily. TDG/mug family. In terms of assembly, binds DNA as a monomer.

The protein localises to the cytoplasm. The catalysed reaction is Specifically hydrolyzes mismatched double-stranded DNA and polynucleotides, releasing free uracil.. Its function is as follows. Excises ethenocytosine and uracil, which can arise by alkylation or deamination of cytosine, respectively, from the corresponding mispairs with guanine in ds-DNA. It is capable of hydrolyzing the carbon-nitrogen bond between the sugar-phosphate backbone of the DNA and the mispaired base. The complementary strand guanine functions in substrate recognition. Required for DNA damage lesion repair in stationary-phase cells. The chain is G/U mismatch-specific DNA glycosylase from Escherichia coli O157:H7 (strain EC4115 / EHEC).